A 262-amino-acid chain; its full sequence is MTSRYKLTLSYDGHDFHGFQSQPGQRTIQGTVEEILKQMTKGQEVRVFGSGRTDAGVHSVGQVIHFDYPGREIPAANMIKALNSQLPMDMVFTDCEIVDKDFHSRFSVKGKWYRYRVSLDGFVNPFKRFYTGHYPYPVDVEKMQEAAKDLLGRHDFTSFAASGGQIEDKVRDMYYVNVALDEENNEVIMDFIATGFLYNMVRILVATLLEIGNGRRPVHDLKRVIAAKNRLEVQQTAQACGLYLYHVFYEEVPRKYRLDLDL.

Aspartate 54 (nucleophile) is an active-site residue. Substrate is bound at residue tyrosine 113.

It belongs to the tRNA pseudouridine synthase TruA family. As to quaternary structure, homodimer.

It carries out the reaction uridine(38/39/40) in tRNA = pseudouridine(38/39/40) in tRNA. In terms of biological role, formation of pseudouridine at positions 38, 39 and 40 in the anticodon stem and loop of transfer RNAs. This chain is tRNA pseudouridine synthase A, found in Lactobacillus delbrueckii subsp. bulgaricus (strain ATCC BAA-365 / Lb-18).